A 211-amino-acid chain; its full sequence is Dephospho-CoA kinase (211 aa).

Residues 7–211 (LIGVIGRSGA…ILTRRGVLGE (205 aa)) enclose the DPCK domain. ATP is bound at residue 15 to 20 (GAGKNV).

The protein belongs to the CoaE family.

The protein localises to the cytoplasm. The enzyme catalyses 3'-dephospho-CoA + ATP = ADP + CoA + H(+). Its pathway is cofactor biosynthesis; coenzyme A biosynthesis; CoA from (R)-pantothenate: step 5/5. Catalyzes the phosphorylation of the 3'-hydroxyl group of dephosphocoenzyme A to form coenzyme A. The sequence is that of Dephospho-CoA kinase from Treponema pallidum (strain Nichols).